We begin with the raw amino-acid sequence, 288 residues long: Bifunctional protein FolD 2 (288 aa).

NADP(+) contacts are provided by residues 166-168 (GRS) and Ser191.

The protein belongs to the tetrahydrofolate dehydrogenase/cyclohydrolase family. As to quaternary structure, homodimer.

It carries out the reaction (6R)-5,10-methylene-5,6,7,8-tetrahydrofolate + NADP(+) = (6R)-5,10-methenyltetrahydrofolate + NADPH. It catalyses the reaction (6R)-5,10-methenyltetrahydrofolate + H2O = (6R)-10-formyltetrahydrofolate + H(+). The protein operates within one-carbon metabolism; tetrahydrofolate interconversion. Functionally, catalyzes the oxidation of 5,10-methylenetetrahydrofolate to 5,10-methenyltetrahydrofolate and then the hydrolysis of 5,10-methenyltetrahydrofolate to 10-formyltetrahydrofolate. This is Bifunctional protein FolD 2 from Frankia alni (strain DSM 45986 / CECT 9034 / ACN14a).